Here is a 379-residue protein sequence, read N- to C-terminus: Sialidase-2 (379 aa).

The FRIP motif signature appears at 20–23 (YRIP). Substrate is bound by residues Arg21 and Arg41. Asp46 functions as the Proton acceptor in the catalytic mechanism. The stretch at 127–138 (ITSTDHGKTWSA) is one BNR 1 repeat. Residues Tyr179 and Tyr181 each contribute to the substrate site. The BNR 2 repeat unit spans residues 197–208 (FLSHDHGSTWEL). Residues Glu218, Arg237, and Arg303 each contribute to the substrate site. The Nucleophile role is filled by Tyr333. The active site involves Glu354.

It belongs to the glycosyl hydrolase 33 family.

Its subcellular location is the cytoplasm. The enzyme catalyses Hydrolysis of alpha-(2-&gt;3)-, alpha-(2-&gt;6)-, alpha-(2-&gt;8)- glycosidic linkages of terminal sialic acid residues in oligosaccharides, glycoproteins, glycolipids, colominic acid and synthetic substrates.. Catalyzes the removal of sialic acid (N-acetylneuraminic acid) moieties from glycoproteins, oligosaccharides and gangliosides. The sequence is that of Sialidase-2 (NEU2) from Cricetulus griseus (Chinese hamster).